The following is a 447-amino-acid chain: Phosphoglucosamine mutase (447 aa).

Catalysis depends on serine 104, which acts as the Phosphoserine intermediate. Positions 104, 243, 245, and 247 each coordinate Mg(2+). Phosphoserine is present on serine 104.

The protein belongs to the phosphohexose mutase family. It depends on Mg(2+) as a cofactor. In terms of processing, activated by phosphorylation.

It catalyses the reaction alpha-D-glucosamine 1-phosphate = D-glucosamine 6-phosphate. In terms of biological role, catalyzes the conversion of glucosamine-6-phosphate to glucosamine-1-phosphate. The polypeptide is Phosphoglucosamine mutase (Corynebacterium aurimucosum (strain ATCC 700975 / DSM 44827 / CIP 107346 / CN-1) (Corynebacterium nigricans)).